The chain runs to 63 residues: Small integral membrane protein 43 (63 aa).

Important for interaction with SLC2A1 and SLC2A3 stretches follow at residues 7 to 29 and 51 to 57; these read LLLY…FVVI and HREPWGF. A helical transmembrane segment spans residues 9-29; that stretch reads LYLALFFFLLFLLFLLLFVVI.

In terms of assembly, interacts with glucose transporters SLC2A1/GLUT1 and SLC2A3/GLUT3; the interactions may promote SLC2A1- and SLC2A3-mediated glucose transport to meet the energy needs of mesendoderm differentiation. In terms of tissue distribution, accumulates in the posterior primitive streak of mid-gastrulation embryos at 7.0 dpc. In the adult, highly abundant and enriched in the brain compared to other organs.

It localises to the cell membrane. Functionally, required for mesendoderm differentiation. Interacts with glucose transporters and promotes glucose uptake. Probably augments the glucose uptake capacity of glucose transporter proteins to meet the energy needs of mesendoderm differentiation. This chain is Small integral membrane protein 43, found in Mus musculus (Mouse).